The primary structure comprises 263 residues: uncharacterized protein (263 aa).

It is found in the mitochondrion. This is an uncharacterized protein from Schizosaccharomyces pombe (strain 972 / ATCC 24843) (Fission yeast).